The chain runs to 252 residues: MHGAKVHLNGANPLTDLPSINAVRDIREATCGPVGAPNVTNELSENIILTSLDDLHNWARLSSLWPLLYGTACCFIEFAALIGSRFDFDRFGLVPRSSPRQADLLIVAGTVTMKMAPALVRLYEQMPDPKYVIAMGACTITGGMFSADSTTAVRGVDKLIPVDLYLPGCPPRPEAIFDAVIKLRKKVGNESFQEREKMLQKHRYFSVPHKMKRVQSQVTGAYLNASTQKQALSPSQEIPLEDQNEATKEIAQ.

4 residues coordinate [4Fe-4S] cluster: cysteine 73, cysteine 74, cysteine 138, and cysteine 169. Residues 225 to 236 (ASTQKQALSPSQ) show a composition bias toward polar residues. Positions 225 to 252 (ASTQKQALSPSQEIPLEDQNEATKEIAQ) are disordered.

This sequence belongs to the complex I 20 kDa subunit family. As to quaternary structure, NDH-1 can be composed of about 15 different subunits; different subcomplexes with different compositions have been identified which probably have different functions. [4Fe-4S] cluster is required as a cofactor.

The protein resides in the cellular thylakoid membrane. The enzyme catalyses a plastoquinone + NADH + (n+1) H(+)(in) = a plastoquinol + NAD(+) + n H(+)(out). The catalysed reaction is a plastoquinone + NADPH + (n+1) H(+)(in) = a plastoquinol + NADP(+) + n H(+)(out). In terms of biological role, NDH-1 shuttles electrons from an unknown electron donor, via FMN and iron-sulfur (Fe-S) centers, to quinones in the respiratory and/or the photosynthetic chain. The immediate electron acceptor for the enzyme in this species is believed to be plastoquinone. Couples the redox reaction to proton translocation, and thus conserves the redox energy in a proton gradient. Cyanobacterial NDH-1 also plays a role in inorganic carbon-concentration. The polypeptide is NAD(P)H-quinone oxidoreductase subunit K (Prochlorococcus marinus (strain MIT 9211)).